The chain runs to 194 residues: CASP-like protein 4C1 (194 aa).

Topologically, residues 1–35 (MRSPHAFRNGESPTLRDHTHFHSTVTAQKLRRFNS) are cytoplasmic. The helical transmembrane segment at 36-56 (LILLLRLASFSFSLASAVFML) threads the bilayer. Residues 57-74 (TNSRGSASPHWYDFDAFR) lie on the Extracellular side of the membrane. The helical transmembrane segment at 75-95 (FVFVANAIVALYSVFEMGTCV) threads the bilayer. At 96–114 (WEFSRETTLWPEAFQVWFD) the chain is on the cytoplasmic side. A helical membrane pass occupies residues 115-135 (FGHDQVFSYLLLSAGSAAAAL). Topologically, residues 136–157 (ARTMRGGDTCTANKAFCLQSDV) are extracellular. A helical transmembrane segment spans residues 158-178 (AIGLGFAAFLFLAFSSCFSGF). Residues 179–194 (RVACFLITGSRFHLYS) lie on the Cytoplasmic side of the membrane.

This sequence belongs to the Casparian strip membrane proteins (CASP) family. Homodimer and heterodimers.

It is found in the cell membrane. The protein is CASP-like protein 4C1 of Arabidopsis thaliana (Mouse-ear cress).